We begin with the raw amino-acid sequence, 97 residues long: UPF0235 protein LHK_03181 (97 aa).

The protein belongs to the UPF0235 family.

The sequence is that of UPF0235 protein LHK_03181 from Laribacter hongkongensis (strain HLHK9).